Reading from the N-terminus, the 67-residue chain is Protein AaeX (67 aa).

Transmembrane regions (helical) follow at residues 3-23 (LFPV…ELLL) and 47-67 (PALF…RLFV).

This sequence belongs to the AaeX family.

The protein resides in the cell membrane. In Escherichia coli O157:H7, this protein is Protein AaeX.